The chain runs to 90 residues: Co-chaperonin GroES (90 aa).

The protein belongs to the GroES chaperonin family. In terms of assembly, heptamer of 7 subunits arranged in a ring. Interacts with the chaperonin GroEL.

Its subcellular location is the cytoplasm. Its function is as follows. Together with the chaperonin GroEL, plays an essential role in assisting protein folding. The GroEL-GroES system forms a nano-cage that allows encapsulation of the non-native substrate proteins and provides a physical environment optimized to promote and accelerate protein folding. GroES binds to the apical surface of the GroEL ring, thereby capping the opening of the GroEL channel. The chain is Co-chaperonin GroES from Fusobacterium nucleatum subsp. polymorphum (Fusobacterium polymorphum).